The following is a 272-amino-acid chain: MLLVLNVNNTNTLIAIYSLHADGSTDELRATWRISTRQGQTADEYGILVRSLLASEGLVCEAVRDVVIASVVPPLDWTLRQFCERYFTSKPIFIGPGVKTGLPILTDHPTEVGADRVANCIGAFHRYGGPTIVVDFGTATNFDVVSRKGEFIGGAIAPGLNISAEALFARAARLPRVEIRKPAKMIGTNTVDNLQIGLFWGHIGLVDSILERMISELGHDVKCVATGGLAQVLAGESKYITEVNETLTLDGLRLVYEAQRASREKSGGNRGA.

6-13 is an ATP binding site; sequence NVNNTNTL. Position 113–116 (113–116) interacts with substrate; that stretch reads GADR. Asp115 serves as the catalytic Proton acceptor. Asp135 lines the K(+) pocket. Thr138 provides a ligand contact to ATP. Residue Thr190 coordinates substrate.

It belongs to the type III pantothenate kinase family. As to quaternary structure, homodimer. The cofactor is NH4(+). K(+) is required as a cofactor.

It localises to the cytoplasm. The enzyme catalyses (R)-pantothenate + ATP = (R)-4'-phosphopantothenate + ADP + H(+). It functions in the pathway cofactor biosynthesis; coenzyme A biosynthesis; CoA from (R)-pantothenate: step 1/5. Catalyzes the phosphorylation of pantothenate (Pan), the first step in CoA biosynthesis. This Acidobacterium capsulatum (strain ATCC 51196 / DSM 11244 / BCRC 80197 / JCM 7670 / NBRC 15755 / NCIMB 13165 / 161) protein is Type III pantothenate kinase.